Consider the following 223-residue polypeptide: N-terminal Xaa-Pro-Lys N-methyltransferase 1 (223 aa).

M1 bears the N-acetylmethionine mark. Position 2 is an N-acetylthreonine; in N-terminal Xaa-Pro-Lys N-methyltransferase 1, N-terminally processed (T2). Residues G69, R74, 91 to 93 (DVT), 119 to 120 (LQ), and Q135 each bind S-adenosyl-L-methionine.

The protein belongs to the methyltransferase superfamily. NTM1 family.

It localises to the nucleus. It carries out the reaction N-terminal L-alanyl-L-prolyl-L-lysyl-[protein] + 3 S-adenosyl-L-methionine = N-terminal N,N,N-trimethyl-L-alanyl-L-prolyl-L-lysyl-[protein] + 3 S-adenosyl-L-homocysteine + 3 H(+). It catalyses the reaction N-terminal L-seryl-L-prolyl-L-lysyl-[protein] + 3 S-adenosyl-L-methionine = N-terminal N,N,N-trimethyl-L-seryl-L-prolyl-L-lysyl-[protein] + 3 S-adenosyl-L-homocysteine + 3 H(+). The enzyme catalyses N-terminal L-prolyl-L-prolyl-L-lysyl-[protein] + 2 S-adenosyl-L-methionine = N-terminal N,N-dimethyl-L-prolyl-L-prolyl-L-lysyl-[protein] + 2 S-adenosyl-L-homocysteine + 2 H(+). In terms of biological role, distributive alpha-N-methyltransferase that methylates the N-terminus of target proteins containing the N-terminal motif [Ala/Gly/Pro/Ser]-Pro-Lys when the initiator Met is cleaved. Specifically catalyzes mono-, di- or tri-methylation of the exposed alpha-amino group of the Ala, Gly or Ser residue in the [Ala/Gly/Ser]-Pro-Lys motif and mono- or di-methylation of Pro in the Pro-Pro-Lys motif. Some of the substrates may be primed by NTMT2-mediated monomethylation. Catalyzes the trimethylation of the N-terminal Gly in CENPA (after removal of Met-1). Responsible for the N-terminal methylation of KLHL31, MYL2, MYL3, RB1, RCC1, RPL23A and SET. Required during mitosis for normal bipolar spindle formation and chromosome segregation via its action on RCC1. In Mus musculus (Mouse), this protein is N-terminal Xaa-Pro-Lys N-methyltransferase 1 (Ntmt1).